We begin with the raw amino-acid sequence, 138 residues long: rRNA methyltransferase 1, mitochondrial (138 aa).

The transit peptide at 1–21 (MNNQPCSIVWRRFLTSKVKPA) directs the protein to the mitochondrion. Residues 92–113 (KQDILSSKRQQEEHKSKYSRKS) form a disordered region.

Belongs to the class IV-like SAM-binding methyltransferase superfamily. RNA methyltransferase TrmH family.

The protein resides in the mitochondrion. The enzyme catalyses a guanosine in 21S rRNA + S-adenosyl-L-methionine = a 2'-O-methylguanosine in 21S rRNA + S-adenosyl-L-homocysteine + H(+). Functionally, S-adenosyl-L-methionine-dependent 2'-O-ribose methyltransferase that catalyzes the formation of the 2'-O-methylguanosine corresponding to position 2270 in S.cerevisiae 21S mitochondrial large ribosomal RNA, a universally conserved modification in the peptidyl transferase domain of the 21S rRNA. The polypeptide is rRNA methyltransferase 1, mitochondrial (Lachancea kluyveri (strain ATCC 58438 / CBS 3082 / BCRC 21498 / NBRC 1685 / JCM 7257 / NCYC 543 / NRRL Y-12651) (Yeast)).